Consider the following 98-residue polypeptide: MSDPKPTRSQGDLAETLELLLDKGVVVNADIAVSVGDTELLGVELRAAIASFETAAEYGLDFPTGTDMERVTAAAGVDADDSKSVLERPDPPTTEGSE.

Residues 75–98 (AGVDADDSKSVLERPDPPTTEGSE) form a disordered region. The span at 80–90 (DDSKSVLERPD) shows a compositional bias: basic and acidic residues.

Belongs to the gas vesicle GvpA family. In terms of assembly, gvpF to GvpM interact with each other in vitro, and may form multi-subunit complex(es). Interacts with GvpA.

The protein localises to the gas vesicle. Its function is as follows. A minor component of the gas vesicle. Proteins GvpF to GvpM might be involved in nucleating gas vesicle formation. Gas vesicles are hollow, gas filled proteinaceous nanostructures found in several microbial planktonic microorganisms. They allow positioning of halobacteria at the optimal depth for growth in the poorly aerated, shallow brine pools of their habitat. Functionally, expression of 2 c-vac DNA fragments containing 2 divergently transcribed regions (gvpE-gvpF-gvpG-gvpH-gvpI-gvpJ-gvpK-gvpL-gvpM and gvpA-gvpC-gvpN-gvpO) allows H.volcanii to produce gas vesicles. The protein is Gas vesicle protein J2 of Halobacterium salinarum (strain ATCC 700922 / JCM 11081 / NRC-1) (Halobacterium halobium).